Reading from the N-terminus, the 226-residue chain is Neuromodulin (226 aa).

The segment at 1-226 is disordered; sequence MLCCMRRTKQ…EDPEADQEHA (226 aa). Residues Cys-3 and Cys-4 are each lipidated (S-palmitoyl cysteine). The span at 9–32 shows a compositional bias: basic and acidic residues; that stretch reads KQVEKNDEDQKIEQDGVKPEDKAH. In terms of domain architecture, IQ spans 31–60; it reads AHKAATKIQASFRGHITRKKLKDEKKGDAP. Ser-41 is subject to Phosphoserine; by PHK and PKC. The segment covering 51–84 has biased composition (basic and acidic residues); sequence LKDEKKGDAPAAEAEAKEKDDAPVADGVEKKEGD. Low complexity predominate over residues 85 to 97; sequence GSATTDAAPATSP. Phosphoserine is present on residues Ser-86 and Ser-96. Positions 98-127 are enriched in basic and acidic residues; it reads KAEEPSKAGDAPSEEKKGEGDAAPSEEKAG. The span at 128–139 shows a compositional bias: low complexity; that stretch reads SAETESAAKATT. A phosphoserine mark is found at Ser-142, Ser-144, and Ser-145. Residues 146–158 are compositionally biased toward basic and acidic residues; the sequence is KAEDGPAKEEPKQ. The segment covering 159–192 has biased composition (low complexity); sequence ADVPAAVTDAAATTPAAEDAAKAAQPPTETAESS. The residue at position 172 (Thr-172) is a Phosphothreonine. A phosphoserine mark is found at Ser-191 and Ser-192. Residues 201-214 show a composition bias toward basic and acidic residues; it reads VDEAKPKESARQDE. Residues 215 to 226 are compositionally biased toward acidic residues; the sequence is GKEDPEADQEHA.

This sequence belongs to the neuromodulin family. As to quaternary structure, identified in a complex containing FGFR4, NCAM1, CDH2, PLCG1, FRS2, SRC, SHC1, GAP43 and CTTN. Interacts (via IQ domain) with calmodulin. Binds calmodulin with a greater affinity in the absence of Ca(2+) than in its presence. Phosphorylated. Phosphorylation of this protein by a protein kinase C is specifically correlated with certain forms of synaptic plasticity. In terms of processing, palmitoylated by ZDHHC3. Palmitoylation is regulated by ARF6 and is essential for plasma membrane association and axonal and dendritic filopodia induction. Deacylated by LYPLA2. In terms of tissue distribution, expressed in hippocampal neurons, with highest levels of expression in the CA4 and CA3 neurons and lower levels in CA1 neurons. Expressed in the dorsal root ganglion.

It localises to the cell membrane. It is found in the cell projection. The protein localises to the growth cone. Its subcellular location is the growth cone membrane. The protein resides in the synapse. It localises to the filopodium membrane. It is found in the perikaryon. The protein localises to the dendrite. Its subcellular location is the axon. The protein resides in the cytoplasm. This protein is associated with nerve growth. It is a major component of the motile 'growth cones' that form the tips of elongating axons. Plays a role in axonal and dendritic filopodia induction. The sequence is that of Neuromodulin (Gap43) from Rattus norvegicus (Rat).